The primary structure comprises 533 residues: Kelch-like protein 33 (533 aa).

Kelch repeat units follow at residues 210–258, 273–322, 323–369, 371–418, 419–465, and 467–514; these read ALVV…ALPA, ELYV…ALDG, KLYA…ILEG, LYVS…ALGG, RLYV…VLQG, and LLVL…ILTL.

The chain is Kelch-like protein 33 (KLHL33) from Homo sapiens (Human).